A 330-amino-acid chain; its full sequence is MKTAYIAKQRQISFVKSHFSRQLEERLGLIEVQAPILSRVGDGTQDNLSGCEKAVQVKVKALPDAQFEVVHSLAKWKRQTLGQHDFSAGEGLYTHMKALRPDEDRLSPLHSVYVDQWDWERVMGDGERQFSTLKSTVEAIWAGIKATEAEVHKQFGLAPFLPDQIHFVHSQELLARFPDLDAKGRERAIAKELGAVFLVGIGGKLSDGHRHDVRAPDYDDWSSASELGYAGLNGDILVWNPVLEDAFELSSMGIRVDADTLMRQLALTGDEDRLQLEWHQALLRGEMPQTIGGGIGQSRLTMLLLQLPHIGQVQCGVWPAQVRESIPAIL.

The protein belongs to the class-II aminoacyl-tRNA synthetase family. AsnA subfamily.

The protein resides in the cytoplasm. The catalysed reaction is L-aspartate + NH4(+) + ATP = L-asparagine + AMP + diphosphate + H(+). The protein operates within amino-acid biosynthesis; L-asparagine biosynthesis; L-asparagine from L-aspartate (ammonia route): step 1/1. This is Aspartate--ammonia ligase from Salmonella paratyphi A (strain ATCC 9150 / SARB42).